We begin with the raw amino-acid sequence, 565 residues long: Sialate:O-sulfotransferase 2 (565 aa).

Over 1 to 18 the chain is Cytoplasmic; sequence MAKLWFKFQRYFRRKPVR. Residues 19–41 form a helical; Signal-anchor for type II membrane protein membrane-spanning segment; that stretch reads FFTFLALYLTAGSLVFLHSGFVG. Residues 42–565 lie on the Extracellular side of the membrane; the sequence is QPAVSGNQAN…TGVPDDYYPR (524 aa). WSC domains are found at residues 127–219 and 230–324; these read RAKY…YRLQ and SAVF…YQTQ. N-linked (GlcNAc...) asparagine glycans are attached at residues Asn-189 and Asn-242.

The protein belongs to the WSCD family.

It is found in the golgi apparatus membrane. Its function is as follows. Sialate:O-sulfotransferase which catalyzes 8-O-sulfation at the Sia-glycan level using 3'-phosphoadenosine 5'-phosphosulfate (PAPS) as a donor, forming 8-O-sulfated Sia (Sia8S)-glycans. Displays selectivity toward glycoproteins such as TF/transferrin. The sequence is that of Sialate:O-sulfotransferase 2 (WSCD2) from Homo sapiens (Human).